A 262-amino-acid polypeptide reads, in one-letter code: Hydroxyethylthiazole kinase (262 aa).

Met50 is a substrate binding site. Positions 125 and 171 each coordinate ATP. Gly198 provides a ligand contact to substrate.

This sequence belongs to the Thz kinase family. Mg(2+) serves as cofactor.

The catalysed reaction is 5-(2-hydroxyethyl)-4-methylthiazole + ATP = 4-methyl-5-(2-phosphooxyethyl)-thiazole + ADP + H(+). It functions in the pathway cofactor biosynthesis; thiamine diphosphate biosynthesis; 4-methyl-5-(2-phosphoethyl)-thiazole from 5-(2-hydroxyethyl)-4-methylthiazole: step 1/1. Catalyzes the phosphorylation of the hydroxyl group of 4-methyl-5-beta-hydroxyethylthiazole (THZ). The protein is Hydroxyethylthiazole kinase of Shigella boydii serotype 18 (strain CDC 3083-94 / BS512).